We begin with the raw amino-acid sequence, 306 residues long: UDP-N-acetylenolpyruvoylglucosamine reductase (306 aa).

In terms of domain architecture, FAD-binding PCMH-type spans 34–198 (VGGPADLLIT…LEVTFKLHNS (165 aa)). Arginine 177 is a catalytic residue. The active-site Proton donor is the serine 227. The active site involves glutamate 297.

This sequence belongs to the MurB family. Requires FAD as cofactor.

The protein localises to the cytoplasm. The enzyme catalyses UDP-N-acetyl-alpha-D-muramate + NADP(+) = UDP-N-acetyl-3-O-(1-carboxyvinyl)-alpha-D-glucosamine + NADPH + H(+). It functions in the pathway cell wall biogenesis; peptidoglycan biosynthesis. In terms of biological role, cell wall formation. The polypeptide is UDP-N-acetylenolpyruvoylglucosamine reductase (Clostridium botulinum (strain Okra / Type B1)).